We begin with the raw amino-acid sequence, 297 residues long: Protoheme IX farnesyltransferase (297 aa).

A run of 9 helical transmembrane segments spans residues 26-46 (VTQLAVFCAVIGMFLATPGMV), 48-68 (YPVLFGGIVGIWLLAGAAFAV), 96-116 (LHIIIFSIILGSLGMIILWNF), 120-140 (LTMWLTLATFVGYAVIYTWLL), 147-167 (NIVIGGLSGAMPPALGWAAVT), 174-194 (AWHLVLIIFVWTPPHFWALAL), 218-238 (LLNIVLYTLILIAATMLPYIY), 245-265 (YLISAIILGLLFLAYVVALFI), and 276-296 (FRFSITYLSLLFAALLVDHYF).

Belongs to the UbiA prenyltransferase family. Protoheme IX farnesyltransferase subfamily.

The protein localises to the cell inner membrane. The enzyme catalyses heme b + (2E,6E)-farnesyl diphosphate + H2O = Fe(II)-heme o + diphosphate. Its pathway is porphyrin-containing compound metabolism; heme O biosynthesis; heme O from protoheme: step 1/1. Its function is as follows. Converts heme B (protoheme IX) to heme O by substitution of the vinyl group on carbon 2 of heme B porphyrin ring with a hydroxyethyl farnesyl side group. In Polynucleobacter necessarius subsp. necessarius (strain STIR1), this protein is Protoheme IX farnesyltransferase.